A 290-amino-acid chain; its full sequence is Short-chain dehydrogenase srdE (290 aa).

Residues I11, T37, D58, and N86 each contribute to the NADP(+) site. Residues 125-145 traverse the membrane as a helical segment; the sequence is LIASSGIIVNIGSIGGVVPFV. Position 150 (Y150) interacts with NADP(+). The Proton donor role is filled by Y150. N151 carries an N-linked (GlcNAc...) asparagine glycan. K154, V183, and T185 together coordinate NADP(+). The active-site Lowers pKa of active site Tyr is the K154.

The protein belongs to the short-chain dehydrogenases/reductases (SDR) family.

The protein resides in the membrane. Short-chain dehydrogenase; part of the gene cluster that mediates the biosynthesis of sordarial, a salicylic aldehyde structurally related to the phytotoxin pyriculol. The most interesting aspect of this pathway is formation of an aromatic product from the highly reducing polyketide synthase srdA. SrdA synthesizes a reduced polyketide chain from one molecule of acetyl-CoA and five molecules of malonyl-CoA. The polyketide chain is then reductively released as an aldehyde. The oxidoreductases srdC, srdD and srdE then oxidize one of the hydroxy groups to facilitate the intramolecular aldol condensation, followed by dehydration to yield a salicylic aldehyde. This aldehyde can undergo facile reduction by endogenous reductases to yield the alcohol 1-hydroxy-2-hydroxymethyl-3-pent-1,3-dienylbenzene. The flavin-dependent srdI counteract against the propensity of the aldehydes to be reduced under physiological conditions and is responsible for reoxidizing 1-hydroxy-2-hydroxymethyl-3-pent-1,3-dienylbenzene back to the salicylic aldehyde. This salicylic aldehyde is then selectively epoxidized by the cupin-domain-containing oxidoreductase srdB to yield the epoxide, which can be hydrolyzed stereoselectively by the hydrolase srdG to give the final product sordarial. The protein is Short-chain dehydrogenase srdE of Neurospora crassa (strain ATCC 24698 / 74-OR23-1A / CBS 708.71 / DSM 1257 / FGSC 987).